A 371-amino-acid polypeptide reads, in one-letter code: Bifunctional enzyme IspD/IspF (371 aa).

A 2-C-methyl-D-erythritol 4-phosphate cytidylyltransferase region spans residues methionine 1 to isoleucine 214. The tract at residues lysine 215–aspartate 371 is 2-C-methyl-D-erythritol 2,4-cyclodiphosphate synthase. Aspartate 221 and histidine 223 together coordinate a divalent metal cation. 4-CDP-2-C-methyl-D-erythritol 2-phosphate contacts are provided by residues aspartate 221 to histidine 223 and histidine 247 to serine 248. Histidine 255 contacts a divalent metal cation. Residues aspartate 269–glycine 271, phenylalanine 274–asparagine 278, and lysine 355 each bind 4-CDP-2-C-methyl-D-erythritol 2-phosphate.

The protein in the N-terminal section; belongs to the IspD/TarI cytidylyltransferase family. IspD subfamily. It in the C-terminal section; belongs to the IspF family. The cofactor is a divalent metal cation.

The enzyme catalyses 2-C-methyl-D-erythritol 4-phosphate + CTP + H(+) = 4-CDP-2-C-methyl-D-erythritol + diphosphate. It carries out the reaction 4-CDP-2-C-methyl-D-erythritol 2-phosphate = 2-C-methyl-D-erythritol 2,4-cyclic diphosphate + CMP. It functions in the pathway isoprenoid biosynthesis; isopentenyl diphosphate biosynthesis via DXP pathway; isopentenyl diphosphate from 1-deoxy-D-xylulose 5-phosphate: step 2/6. It participates in isoprenoid biosynthesis; isopentenyl diphosphate biosynthesis via DXP pathway; isopentenyl diphosphate from 1-deoxy-D-xylulose 5-phosphate: step 4/6. Its function is as follows. Bifunctional enzyme that catalyzes the formation of 4-diphosphocytidyl-2-C-methyl-D-erythritol from CTP and 2-C-methyl-D-erythritol 4-phosphate (MEP) (IspD), and catalyzes the conversion of 4-diphosphocytidyl-2-C-methyl-D-erythritol 2-phosphate (CDP-ME2P) to 2-C-methyl-D-erythritol 2,4-cyclodiphosphate (ME-CPP) with a corresponding release of cytidine 5-monophosphate (CMP) (IspF). In Pelagibacter ubique (strain HTCC1062), this protein is Bifunctional enzyme IspD/IspF.